The primary structure comprises 217 residues: Redox-sensing transcriptional repressor Rex (217 aa).

Residues 18-57 (LYYRFLKNLHASGKQRVSSAELSDAVKVDSATIRRDFSYF) constitute a DNA-binding region (H-T-H motif). An NAD(+)-binding site is contributed by 92–97 (GVGNLG).

Belongs to the transcriptional regulatory Rex family. Homodimer.

It localises to the cytoplasm. Modulates transcription in response to changes in cellular NADH/NAD(+) redox state. This chain is Redox-sensing transcriptional repressor Rex, found in Bacillus pumilus (strain SAFR-032).